We begin with the raw amino-acid sequence, 358 residues long: Alternative oxidase, mitochondrial (358 aa).

Residues 152–172 (LIRMVFLESVAGVPGMVAGML) traverse the membrane as a helical segment. The Fe cation site is built by Glu-159, Glu-198, and His-201. The helical transmembrane segment at 217–237 (FMIIGAQGVFFNSMFLSYLIS) threads the bilayer. Fe cation contacts are provided by Glu-249, Glu-250, Glu-306, and His-309.

The protein belongs to the alternative oxidase family. The cofactor is Fe cation.

The protein localises to the mitochondrion inner membrane. In terms of biological role, catalyzes cyanide-resistant oxygen consumption. May increase respiration when the cytochrome respiratory pathway is restricted, or in response to low temperatures. This chain is Alternative oxidase, mitochondrial, found in Blumeria graminis (Powdery mildew).